A 161-amino-acid chain; its full sequence is S-ribosylhomocysteine lyase (161 aa).

The Fe cation site is built by histidine 53, histidine 57, and cysteine 124.

This sequence belongs to the LuxS family. Homodimer. Requires Fe cation as cofactor.

It catalyses the reaction S-(5-deoxy-D-ribos-5-yl)-L-homocysteine = (S)-4,5-dihydroxypentane-2,3-dione + L-homocysteine. Involved in the synthesis of autoinducer 2 (AI-2) which is secreted by bacteria and is used to communicate both the cell density and the metabolic potential of the environment. The regulation of gene expression in response to changes in cell density is called quorum sensing. Catalyzes the transformation of S-ribosylhomocysteine (RHC) to homocysteine (HC) and 4,5-dihydroxy-2,3-pentadione (DPD). The sequence is that of S-ribosylhomocysteine lyase from Phocaeicola vulgatus (strain ATCC 8482 / DSM 1447 / JCM 5826 / CCUG 4940 / NBRC 14291 / NCTC 11154) (Bacteroides vulgatus).